The following is a 202-amino-acid chain: CASP-like protein 1E1 (202 aa).

Topologically, residues 1–33 (MESQCRPNVDGVHNGVESHVKVVEKPRSVGSSS) are cytoplasmic. The helical transmembrane segment at 34-54 (EFVLRILGLLLTLIAAVVAGV) threads the bilayer. Residues 55–85 (DKQTKIIPLTLIKTLPSLHVPVTAKWSDMSA) lie on the Extracellular side of the membrane. The helical transmembrane segment at 86 to 106 (FVYLVVSNAIACSYAAISLVL) threads the bilayer. Topologically, residues 107–118 (VTMLGRRGKGGR) are cytoplasmic. Residues 119–139 (VLAVIVLDLHMVGLLFSANGA) traverse the membrane as a helical segment. Residues 140–172 (ATAVGVLGQYGNSHVEWKKVCNVFDSFCHHLVA) are Extracellular-facing. Residues 173-193 (SLALSFLGSLSFLGLVLLAIL) form a helical membrane-spanning segment. Residues 194 to 202 (NLHKKSSTK) lie on the Cytoplasmic side of the membrane.

Belongs to the Casparian strip membrane proteins (CASP) family. As to quaternary structure, homodimer and heterodimers.

The protein localises to the cell membrane. This is CASP-like protein 1E1 from Vitis vinifera (Grape).